The following is a 156-amino-acid chain: Ribosome maturation factor RimP (156 aa).

The protein belongs to the RimP family.

It is found in the cytoplasm. Functionally, required for maturation of 30S ribosomal subunits. In Shouchella clausii (strain KSM-K16) (Alkalihalobacillus clausii), this protein is Ribosome maturation factor RimP.